A 131-amino-acid polypeptide reads, in one-letter code: Holin-like protein CidA (131 aa).

4 helical membrane-spanning segments follow: residues 4-24, 30-50, 65-85, and 88-108; these read VQLI…TYIG, IFHL…LLLQ, FLLK…MDVA, and ITLN…IVAL.

This sequence belongs to the CidA/LrgA family. CidA subfamily.

The protein localises to the cell membrane. Functionally, increases the activity of extracellular murein hydrolases possibly by mediating their export via hole formation. Inhibited by the antiholin-like proteins LrgAB. In an unstressed cell, the LrgAB products probably inhibit the function of the CidAB proteins. When a cell is stressed by the addition of antibiotics or by other factors in the environment, the CidAB proteins possibly oligomerize within the bacterial cell membrane, creating lesions that disrupt the proton motive force, which in turn results in loss of cell viability. These lesions are also hypothesized to regulate the subsequent cell lysis by either allowing the murein hydrolases access to the cell wall substrate and/or regulating their activity by a possible change in the cell wall pH that results from loss of membrane potential. In Staphylococcus aureus (strain Mu3 / ATCC 700698), this protein is Holin-like protein CidA.